Reading from the N-terminus, the 609-residue chain is Dihydroxy-acid dehydratase (609 aa).

Aspartate 81 is a binding site for Mg(2+). [2Fe-2S] cluster is bound at residue cysteine 122. The Mg(2+) site is built by aspartate 123 and lysine 124. Lysine 124 carries the N6-carboxylysine modification. Position 195 (cysteine 195) interacts with [2Fe-2S] cluster. Glutamate 491 is a binding site for Mg(2+). Serine 517 (proton acceptor) is an active-site residue.

The protein belongs to the IlvD/Edd family. Homodimer. Requires [2Fe-2S] cluster as cofactor. Mg(2+) serves as cofactor.

The catalysed reaction is (2R)-2,3-dihydroxy-3-methylbutanoate = 3-methyl-2-oxobutanoate + H2O. It catalyses the reaction (2R,3R)-2,3-dihydroxy-3-methylpentanoate = (S)-3-methyl-2-oxopentanoate + H2O. It participates in amino-acid biosynthesis; L-isoleucine biosynthesis; L-isoleucine from 2-oxobutanoate: step 3/4. Its pathway is amino-acid biosynthesis; L-valine biosynthesis; L-valine from pyruvate: step 3/4. Functionally, functions in the biosynthesis of branched-chain amino acids. Catalyzes the dehydration of (2R,3R)-2,3-dihydroxy-3-methylpentanoate (2,3-dihydroxy-3-methylvalerate) into 2-oxo-3-methylpentanoate (2-oxo-3-methylvalerate) and of (2R)-2,3-dihydroxy-3-methylbutanoate (2,3-dihydroxyisovalerate) into 2-oxo-3-methylbutanoate (2-oxoisovalerate), the penultimate precursor to L-isoleucine and L-valine, respectively. This is Dihydroxy-acid dehydratase from Acinetobacter baumannii (strain ACICU).